We begin with the raw amino-acid sequence, 305 residues long: Carbamate kinase (305 aa).

It belongs to the carbamate kinase family.

It is found in the cytoplasm. It catalyses the reaction hydrogencarbonate + NH4(+) + ATP = carbamoyl phosphate + ADP + H2O + H(+). It functions in the pathway metabolic intermediate metabolism; carbamoyl phosphate degradation; CO(2) and NH(3) from carbamoyl phosphate: step 1/1. The polypeptide is Carbamate kinase (arcC) (Thermoplasma acidophilum (strain ATCC 25905 / DSM 1728 / JCM 9062 / NBRC 15155 / AMRC-C165)).